The primary structure comprises 158 residues: NADPH-dependent 7-cyano-7-deazaguanine reductase (158 aa).

Catalysis depends on Cys-56, which acts as the Thioimide intermediate. Asp-63 serves as the catalytic Proton donor. Substrate-binding positions include 78–80 (VES) and 97–98 (HE).

This sequence belongs to the GTP cyclohydrolase I family. QueF type 1 subfamily.

It localises to the cytoplasm. It carries out the reaction 7-aminomethyl-7-carbaguanine + 2 NADP(+) = 7-cyano-7-deazaguanine + 2 NADPH + 3 H(+). Its pathway is tRNA modification; tRNA-queuosine biosynthesis. Its function is as follows. Catalyzes the NADPH-dependent reduction of 7-cyano-7-deazaguanine (preQ0) to 7-aminomethyl-7-deazaguanine (preQ1). The protein is NADPH-dependent 7-cyano-7-deazaguanine reductase of Rhodopseudomonas palustris (strain BisB5).